The sequence spans 391 residues: 1-deoxy-D-xylulose 5-phosphate reductoisomerase (391 aa).

Threonine 11, glycine 12, serine 13, isoleucine 14, glycine 37, asparagine 39, and asparagine 125 together coordinate NADPH. Lysine 126 is a binding site for 1-deoxy-D-xylulose 5-phosphate. Glutamate 127 serves as a coordination point for NADPH. Aspartate 151 provides a ligand contact to Mn(2+). Serine 152, glutamate 153, serine 176, and histidine 199 together coordinate 1-deoxy-D-xylulose 5-phosphate. Glutamate 153 serves as a coordination point for Mn(2+). Glycine 205 contributes to the NADPH binding site. 4 residues coordinate 1-deoxy-D-xylulose 5-phosphate: serine 212, asparagine 217, lysine 218, and glutamate 221. Mn(2+) is bound at residue glutamate 221.

This sequence belongs to the DXR family. Requires Mg(2+) as cofactor. It depends on Mn(2+) as a cofactor.

It catalyses the reaction 2-C-methyl-D-erythritol 4-phosphate + NADP(+) = 1-deoxy-D-xylulose 5-phosphate + NADPH + H(+). The protein operates within isoprenoid biosynthesis; isopentenyl diphosphate biosynthesis via DXP pathway; isopentenyl diphosphate from 1-deoxy-D-xylulose 5-phosphate: step 1/6. Its function is as follows. Catalyzes the NADPH-dependent rearrangement and reduction of 1-deoxy-D-xylulose-5-phosphate (DXP) to 2-C-methyl-D-erythritol 4-phosphate (MEP). In Heliobacterium modesticaldum (strain ATCC 51547 / Ice1), this protein is 1-deoxy-D-xylulose 5-phosphate reductoisomerase.